A 577-amino-acid polypeptide reads, in one-letter code: Isocitrate dehydrogenase kinase/phosphatase (577 aa).

Residues 324–330 (APGIRGL) and Lys-345 contribute to the ATP site. The active site involves Asp-380.

The protein belongs to the AceK family.

The protein localises to the cytoplasm. It catalyses the reaction L-seryl-[isocitrate dehydrogenase] + ATP = O-phospho-L-seryl-[isocitrate dehydrogenase] + ADP + H(+). Functionally, bifunctional enzyme which can phosphorylate or dephosphorylate isocitrate dehydrogenase (IDH) on a specific serine residue. This is a regulatory mechanism which enables bacteria to bypass the Krebs cycle via the glyoxylate shunt in response to the source of carbon. When bacteria are grown on glucose, IDH is fully active and unphosphorylated, but when grown on acetate or ethanol, the activity of IDH declines drastically concomitant with its phosphorylation. This is Isocitrate dehydrogenase kinase/phosphatase from Pseudoalteromonas atlantica (strain T6c / ATCC BAA-1087).